A 341-amino-acid chain; its full sequence is tRNA N6-adenosine threonylcarbamoyltransferase (341 aa).

The Fe cation site is built by histidine 111 and histidine 115. Substrate contacts are provided by residues 134–138 (LVSGG), aspartate 167, glycine 180, and asparagine 276. Residue aspartate 304 coordinates Fe cation.

Belongs to the KAE1 / TsaD family. The cofactor is Fe(2+).

Its subcellular location is the cytoplasm. It carries out the reaction L-threonylcarbamoyladenylate + adenosine(37) in tRNA = N(6)-L-threonylcarbamoyladenosine(37) in tRNA + AMP + H(+). Functionally, required for the formation of a threonylcarbamoyl group on adenosine at position 37 (t(6)A37) in tRNAs that read codons beginning with adenine. Is involved in the transfer of the threonylcarbamoyl moiety of threonylcarbamoyl-AMP (TC-AMP) to the N6 group of A37, together with TsaE and TsaB. TsaD likely plays a direct catalytic role in this reaction. The protein is tRNA N6-adenosine threonylcarbamoyltransferase of Pseudomonas putida (strain ATCC 700007 / DSM 6899 / JCM 31910 / BCRC 17059 / LMG 24140 / F1).